The primary structure comprises 211 residues: tRNA (guanine-N(7)-)-methyltransferase (211 aa).

S-adenosyl-L-methionine-binding residues include glutamate 44, aspartate 69, aspartate 96, and aspartate 118. Residue aspartate 118 is part of the active site. Substrate is bound at residue lysine 122. The tract at residues 124–129 (KHEKRR) is interaction with RNA. Residues aspartate 154 and 191–194 (TEYE) each bind substrate.

The protein belongs to the class I-like SAM-binding methyltransferase superfamily. TrmB family.

The enzyme catalyses guanosine(46) in tRNA + S-adenosyl-L-methionine = N(7)-methylguanosine(46) in tRNA + S-adenosyl-L-homocysteine. The protein operates within tRNA modification; N(7)-methylguanine-tRNA biosynthesis. Functionally, catalyzes the formation of N(7)-methylguanine at position 46 (m7G46) in tRNA. This is tRNA (guanine-N(7)-)-methyltransferase from Streptococcus agalactiae serotype Ia (strain ATCC 27591 / A909 / CDC SS700).